A 124-amino-acid polypeptide reads, in one-letter code: Kinocilin (124 aa).

The next 2 membrane-spanning stretches (helical) occupy residues 13 to 33 and 40 to 60; these read LQLA…GISV and MGGV…YPFL. Residues 80–124 are disordered; the sequence is PHPGADHGEGRSSTNGNKEGARSSLSTVSRTLEKLKPGTRGAEEC. Over residues 90–109 the composition is skewed to polar residues; sequence RSSTNGNKEGARSSLSTVSR. The segment covering 110–124 has biased composition (basic and acidic residues); that stretch reads TLEKLKPGTRGAEEC.

The protein resides in the membrane. May play a role in stabilizing dense microtubular networks or in vesicular trafficking. This is Kinocilin (KNCN) from Homo sapiens (Human).